We begin with the raw amino-acid sequence, 183 residues long: Acireductone dioxygenase (183 aa).

Fe(2+) contacts are provided by His-95, His-97, Glu-101, and His-139. The Ni(2+) site is built by His-95, His-97, Glu-101, and His-139.

The protein belongs to the acireductone dioxygenase (ARD) family. As to quaternary structure, monomer. Fe(2+) is required as a cofactor. Ni(2+) serves as cofactor.

It catalyses the reaction 1,2-dihydroxy-5-(methylsulfanyl)pent-1-en-3-one + O2 = 3-(methylsulfanyl)propanoate + CO + formate + 2 H(+). The catalysed reaction is 1,2-dihydroxy-5-(methylsulfanyl)pent-1-en-3-one + O2 = 4-methylsulfanyl-2-oxobutanoate + formate + 2 H(+). It functions in the pathway amino-acid biosynthesis; L-methionine biosynthesis via salvage pathway; L-methionine from S-methyl-5-thio-alpha-D-ribose 1-phosphate: step 5/6. In terms of biological role, catalyzes 2 different reactions between oxygen and the acireductone 1,2-dihydroxy-3-keto-5-methylthiopentene (DHK-MTPene) depending upon the metal bound in the active site. Fe-containing acireductone dioxygenase (Fe-ARD) produces formate and 2-keto-4-methylthiobutyrate (KMTB), the alpha-ketoacid precursor of methionine in the methionine recycle pathway. Ni-containing acireductone dioxygenase (Ni-ARD) produces methylthiopropionate, carbon monoxide and formate, and does not lie on the methionine recycle pathway. This chain is Acireductone dioxygenase, found in Aquifex aeolicus (strain VF5).